Here is a 408-residue protein sequence, read N- to C-terminus: Arginine biosynthesis bifunctional protein ArgJ (408 aa).

6 residues coordinate substrate: threonine 156, lysine 182, threonine 193, glutamate 279, asparagine 403, and serine 408. Residue threonine 193 is the Nucleophile of the active site.

This sequence belongs to the ArgJ family. In terms of assembly, heterotetramer of two alpha and two beta chains.

The protein resides in the cytoplasm. The catalysed reaction is N(2)-acetyl-L-ornithine + L-glutamate = N-acetyl-L-glutamate + L-ornithine. The enzyme catalyses L-glutamate + acetyl-CoA = N-acetyl-L-glutamate + CoA + H(+). It participates in amino-acid biosynthesis; L-arginine biosynthesis; L-ornithine and N-acetyl-L-glutamate from L-glutamate and N(2)-acetyl-L-ornithine (cyclic): step 1/1. It functions in the pathway amino-acid biosynthesis; L-arginine biosynthesis; N(2)-acetyl-L-ornithine from L-glutamate: step 1/4. Functionally, catalyzes two activities which are involved in the cyclic version of arginine biosynthesis: the synthesis of N-acetylglutamate from glutamate and acetyl-CoA as the acetyl donor, and of ornithine by transacetylation between N(2)-acetylornithine and glutamate. The protein is Arginine biosynthesis bifunctional protein ArgJ of Dechloromonas aromatica (strain RCB).